Here is a 756-residue protein sequence, read N- to C-terminus: Lysyl oxidase homolog 4 (756 aa).

An N-terminal signal peptide occupies residues 1-24 (MAWSPPATLFLFLLLLGQPPPSRP). SRCR domains are found at residues 32–133 (LRLV…VICH), 159–287 (VRLK…VSCV), 311–411 (VRLR…VRCN), and 421–529 (VRLA…VSCM). Disulfide bonds link cysteine 58/cysteine 122, cysteine 71/cysteine 132, cysteine 102/cysteine 112, cysteine 191/cysteine 276, cysteine 204/cysteine 286, cysteine 251/cysteine 261, cysteine 336/cysteine 400, cysteine 349/cysteine 410, cysteine 380/cysteine 390, cysteine 450/cysteine 515, cysteine 463/cysteine 528, cysteine 497/cysteine 507, cysteine 558/cysteine 564, cysteine 610/cysteine 658, cysteine 642/cysteine 648, cysteine 670/cysteine 680, and cysteine 717/cysteine 731. N-linked (GlcNAc...) asparagine glycosylation is present at asparagine 198. Residues 533–736 (PDLVMNAQLV…WLHNCHTGNS (204 aa)) are lysyl-oxidase like. Cu cation-binding residues include histidine 611, histidine 613, and histidine 615. An N-linked (GlcNAc...) asparagine glycan is attached at asparagine 629. Residues 638–674 (KASFCLEDTNCPTGLQRRYACANFGEQGVTVGCWDTY) constitute a cross-link (lysine tyrosylquinone (Lys-Tyr)). Tyrosine 674 is subject to 2',4',5'-topaquinone.

It belongs to the lysyl oxidase family. Cu cation is required as a cofactor. The cofactor is lysine tyrosylquinone residue. The lysine tyrosylquinone cross-link (LTQ) is generated by condensation of the epsilon-amino group of a lysine with a topaquinone produced by oxidation of tyrosine. Post-translationally, may be proteolytically cleaved by BMP1. As to expression, expressed in many tissues, the highest levels among the tissues studied being in the skeletal muscle, testis and pancreas. Expressed in cartilage.

The protein localises to the secreted. The protein resides in the extracellular space. The enzyme catalyses L-lysyl-[protein] + O2 + H2O = (S)-2-amino-6-oxohexanoyl-[protein] + H2O2 + NH4(+). Its activity is regulated as follows. Inhibited by beta-aminopropionitrile (BAPN). Functionally, catalyzes the oxidative deamination of lysine and hydroxylysine residues in collagen and elastin, resulting in the formation of covalent cross-linkages, and the stabilization of collagen and elastin fibers. The sequence is that of Lysyl oxidase homolog 4 (LOXL4) from Homo sapiens (Human).